We begin with the raw amino-acid sequence, 346 residues long: 3-dehydroquinate synthase (346 aa).

NAD(+) is bound by residues 62-67 (DGEQYK), 96-100 (GVISD), 120-121 (TT), Lys-133, and Lys-142. Residues Glu-175, His-234, and His-251 each contribute to the Zn(2+) site.

It belongs to the sugar phosphate cyclases superfamily. Dehydroquinate synthase family. The cofactor is Co(2+). Requires Zn(2+) as cofactor. NAD(+) is required as a cofactor.

The protein localises to the cytoplasm. The catalysed reaction is 7-phospho-2-dehydro-3-deoxy-D-arabino-heptonate = 3-dehydroquinate + phosphate. Its pathway is metabolic intermediate biosynthesis; chorismate biosynthesis; chorismate from D-erythrose 4-phosphate and phosphoenolpyruvate: step 2/7. Catalyzes the conversion of 3-deoxy-D-arabino-heptulosonate 7-phosphate (DAHP) to dehydroquinate (DHQ). The protein is 3-dehydroquinate synthase of Campylobacter fetus subsp. fetus (strain 82-40).